A 955-amino-acid chain; its full sequence is UvrABC system protein A (955 aa).

G35 to S42 serves as a coordination point for ATP. ABC transporter domains are found at residues W322 to I601 and G621 to K951. Residue G654–S661 coordinates ATP. The C4-type zinc-finger motif lies at C754–C780.

The protein belongs to the ABC transporter superfamily. UvrA family. Forms a heterotetramer with UvrB during the search for lesions.

It localises to the cytoplasm. Functionally, the UvrABC repair system catalyzes the recognition and processing of DNA lesions. UvrA is an ATPase and a DNA-binding protein. A damage recognition complex composed of 2 UvrA and 2 UvrB subunits scans DNA for abnormalities. When the presence of a lesion has been verified by UvrB, the UvrA molecules dissociate. The chain is UvrABC system protein A from Rickettsia felis (strain ATCC VR-1525 / URRWXCal2) (Rickettsia azadi).